A 430-amino-acid polypeptide reads, in one-letter code: Dihydrolipoyllysine-residue acetyltransferase component of pyruvate dehydrogenase complex (430 aa).

Residues 2–77 (AFEFRLPDIG…VVGDVIVKID (76 aa)) form the Lipoyl-binding domain. Lys43 bears the N6-lipoyllysine mark. Residues 80–122 (DAEDMQFKGHDDDSSSKEEPAKEEAPAEQAPVATQTEEVDENR) are disordered. Over residues 84–104 (MQFKGHDDDSSSKEEPAKEEA) the composition is skewed to basic and acidic residues. One can recognise a Peripheral subunit-binding (PSBD) domain in the interval 125–162 (KAMPSVRKYAREKGVNIKAVSGSGKNGRITKEDVDAYL). The interval 165 to 199 (GAPTASNESAASATNEEVAETPAAPAAVSLEGDFP) is disordered. The span at 168–192 (TASNESAASATNEEVAETPAAPAAV) shows a compositional bias: low complexity. His401 is an active-site residue.

This sequence belongs to the 2-oxoacid dehydrogenase family. In terms of assembly, forms a 24-polypeptide structural core with octahedral symmetry. The cofactor is (R)-lipoate.

The enzyme catalyses N(6)-[(R)-dihydrolipoyl]-L-lysyl-[protein] + acetyl-CoA = N(6)-[(R)-S(8)-acetyldihydrolipoyl]-L-lysyl-[protein] + CoA. In terms of biological role, the pyruvate dehydrogenase complex catalyzes the overall conversion of pyruvate to acetyl-CoA and CO(2). It contains multiple copies of three enzymatic components: pyruvate dehydrogenase (E1), dihydrolipoamide acetyltransferase (E2) and lipoamide dehydrogenase (E3). This chain is Dihydrolipoyllysine-residue acetyltransferase component of pyruvate dehydrogenase complex (pdhC), found in Staphylococcus aureus (strain MRSA252).